The following is a 312-amino-acid chain: MDIIFYHPTFDTQWWIEALRKAIPQARVRAWKSGDNDSADYALAWHPPVEMLAGRDLKAVFALGAGVDSILSKLQAHPEMLKPSVPLFRLEDTGMGEQMQEYAVSQVLHWFRRFDDYRIQQNSSHWQPLPEYHREDFTIGILGAGVLGSKVAQSLQTWRFPLRCWSRTRKSWPGVQSFAGWEELSAFLSQCRVLINLLPNTPETVGIINQQLLEKLPDGAYLLNLARGVHVVEDDLLAALDSGKVKGAMLDVFNREPLPPESPLWQHPRVTITPHVAAITRPAEAVEYISRTIAQLEKGERVCGQVDRARGY.

Arg227 is a catalytic residue. His275 functions as the Proton donor in the catalytic mechanism.

Belongs to the D-isomer specific 2-hydroxyacid dehydrogenase family. GhrA subfamily.

It localises to the cytoplasm. It catalyses the reaction glycolate + NADP(+) = glyoxylate + NADPH + H(+). It carries out the reaction (R)-glycerate + NAD(+) = 3-hydroxypyruvate + NADH + H(+). The enzyme catalyses (R)-glycerate + NADP(+) = 3-hydroxypyruvate + NADPH + H(+). Functionally, catalyzes the NADPH-dependent reduction of glyoxylate and hydroxypyruvate into glycolate and glycerate, respectively. The protein is Glyoxylate/hydroxypyruvate reductase A of Escherichia coli O157:H7.